The primary structure comprises 1161 residues: Lateral signaling target protein 2 homolog (1161 aa).

6 disordered regions span residues 417–510, 583–831, 890–918, 935–978, 992–1014, and 1029–1095; these read ATGS…EVDD, AAGS…PTQS, MNSS…HNHP, DQQN…SVES, SSPV…TGQE, and GKAS…EPPR. Over residues 419 to 429 the composition is skewed to gly residues; that stretch reads GSSGFGSGRGG. Residues 438–453 are compositionally biased toward basic residues; the sequence is PKQRHNQAHLRQRGAP. Residues 468-487 are compositionally biased toward basic and acidic residues; sequence GDDREPVVEEDNNNHLRKEI. A compositionally biased stretch (acidic residues) spans 488–510; the sequence is EEEDVDDDMEEEEEDEEEDEVDD. The segment covering 583 to 601 has biased composition (low complexity); it reads AAGSGGQQQQQQQQQLIDS. Over residues 669-704 the composition is skewed to acidic residues; the sequence is SDYEEADVDDEPDDVDADDDDEEEDDVVGEVEEQND. Residues 728–742 are compositionally biased toward basic residues; that stretch reads KAARNHRKSSHHRPR. A compositionally biased stretch (low complexity) spans 743–757; it reads PSTSSSSSSAAYRNK. Positions 758 to 773 are enriched in basic residues; sequence SQSHQHHHHHHHHHHH. Composition is skewed to low complexity over residues 781–800 and 807–831; these read GTSS…SNGS and MQQQ…PTQS. Acidic residues predominate over residues 896–910; that stretch reads EPDEPPEPSGSEEES. Composition is skewed to polar residues over residues 935-948 and 956-967; these read DQQN…QSIY and EQDSVFGSSGDS. Gly residues predominate over residues 996–1010; the sequence is GAGGAGGGGMVGGSR. Low complexity predominate over residues 1054–1065; sequence SRSSPSSPVNSN. The segment covering 1081 to 1094 has biased composition (basic and acidic residues); the sequence is TAHEQQRRMPEEPP. Residues 1099–1159 form an FYVE-type zinc finger; it reads DCDAPRCMAC…VCRDCYIHEV (61 aa). Residues C1105, C1108, C1121, C1124, C1129, C1132, C1151, and C1154 each coordinate Zn(2+).

This sequence belongs to the lst-2 family.

Negative regulator of epidermal growth factor receptor (EGFR) signaling. This Anopheles gambiae (African malaria mosquito) protein is Lateral signaling target protein 2 homolog.